A 320-amino-acid polypeptide reads, in one-letter code: Transcription factor NAI1 (320 aa).

The disordered stretch occupies residues 53 to 105; that stretch reads TKQMKTNNNMNSTSSSPSSSSSSGSRTSQVISFGSPDTKTNPVETSLNFSNQV. Residues 58-80 are compositionally biased toward low complexity; sequence TNNNMNSTSSSPSSSSSSGSRTS. Positions 81-105 are enriched in polar residues; sequence QVISFGSPDTKTNPVETSLNFSNQV. In terms of domain architecture, bHLH spans 128 to 177; the sequence is HLLKEHVLAERKRRQKLNERLIALSALLPGLKKTDKATVLEDAIKHLKQL.

Homodimer. As to expression, expressed constitutively in roots, leaves, stems, and flowers.

Its subcellular location is the nucleus. In terms of biological role, transcription activator that regulates the expression of at least NAI2, PYK10 and PBP1. Required for and mediates the formation of endoplasmic reticulum bodies (ER bodies). Involved in the symbiotic interactions with the endophytes of the Sebacinaceae fungus family, such as Piriformospora indica and Sebacina. This Arabidopsis thaliana (Mouse-ear cress) protein is Transcription factor NAI1 (NAI1).